Consider the following 207-residue polypeptide: Putative zinc finger protein 137 (207 aa).

The segment at 72-94 (CKCNDCHKVFSNATTIANHWRIH) adopts a C2H2-type 1 zinc-finger fold. The C2H2-type 2; degenerate zinc-finger motif lies at 100-122 (YKCNKCGKIFRHRSYLAVYQRTH). Residues 128 to 150 (YKYHDCGKVFSQASSYAKHRRIH) form a C2H2-type 3; degenerate zinc finger. 2 C2H2-type zinc fingers span residues 156–178 (HKCDDCGKVLTSRSHLIRHQRIH) and 184–206 (YKCLKCGKVFSLWALHAEHQKIH).

Belongs to the krueppel C2H2-type zinc-finger protein family.

Its subcellular location is the nucleus. Its function is as follows. May be involved in transcriptional regulation. The chain is Putative zinc finger protein 137 (ZNF137P) from Homo sapiens (Human).